The primary structure comprises 137 residues: Phospholipase A2 homolog PLA2-03 (137 aa).

Positions 1 to 16 (MRTLWIVAVLLVGVEG) are cleaved as a signal peptide. 7 disulfide bridges follow: Cys42–Cys131, Cys44–Cys60, Cys59–Cys111, Cys65–Cys137, Cys66–Cys104, Cys73–Cys97, and Cys91–Cys102. The tract at residues 121–133 (KKYKIFPKFLCKK) is important for membrane-damaging activities in eukaryotes and bacteria; heparin-binding.

This sequence belongs to the phospholipase A2 family. Group II subfamily. K49 sub-subfamily. In terms of tissue distribution, expressed by the venom gland.

The protein localises to the secreted. In terms of biological role, snake venom phospholipase A2 homolog that lacks enzymatic activity. Is myotoxic and displays edema-inducing activities in mouse paw. A model of myotoxic mechanism has been proposed: an apo Lys49-PLA2 is activated by the entrance of a hydrophobic molecule (e.g. fatty acid) at the hydrophobic channel of the protein leading to a reorientation of a monomer. This reorientation causes a transition between 'inactive' to 'active' states, causing alignment of C-terminal and membrane-docking sites (MDoS) side-by-side and putting the membrane-disruption sites (MDiS) in the same plane, exposed to solvent and in a symmetric position for both monomers. The MDoS region stabilizes the toxin on membrane by the interaction of charged residues with phospholipid head groups. Subsequently, the MDiS region destabilizes the membrane with penetration of hydrophobic residues. This insertion causes a disorganization of the membrane, allowing an uncontrolled influx of ions (i.e. calcium and sodium), and eventually triggering irreversible intracellular alterations and cell death. In Ovophis okinavensis (Ryukyu Island pit viper), this protein is Phospholipase A2 homolog PLA2-03.